The following is a 529-amino-acid chain: Ribonuclease Y (529 aa).

The chain crosses the membrane as a helical span at residues 4–24; that stretch reads GLIYISLEVIVACLISALAMY. One can recognise a KH domain in the interval 216 to 297; the sequence is FTNRIALPCS…NRIEEVYHRV (82 aa). The region spanning 342–435 is the HD domain; that stretch reads ALQHSKEVAL…VCAADALSAG (94 aa).

It belongs to the RNase Y family.

The protein resides in the cell membrane. Its function is as follows. Endoribonuclease that initiates mRNA decay. This chain is Ribonuclease Y, found in Helicobacter acinonychis (strain Sheeba).